The primary structure comprises 67 residues: Large ribosomal subunit protein bL31 (67 aa).

Zn(2+) is bound by residues Cys-16, Cys-18, Cys-36, and Cys-39.

This sequence belongs to the bacterial ribosomal protein bL31 family. Type A subfamily. Part of the 50S ribosomal subunit. Zn(2+) serves as cofactor.

In terms of biological role, binds the 23S rRNA. The sequence is that of Large ribosomal subunit protein bL31 from Treponema denticola (strain ATCC 35405 / DSM 14222 / CIP 103919 / JCM 8153 / KCTC 15104).